The chain runs to 89 residues: Small ribosomal subunit protein bS20 (89 aa).

Belongs to the bacterial ribosomal protein bS20 family.

In terms of biological role, binds directly to 16S ribosomal RNA. This Stenotrophomonas maltophilia (strain K279a) protein is Small ribosomal subunit protein bS20.